The primary structure comprises 217 residues: Probable GTP-binding protein EngB (217 aa).

Residues Glu-27–Glu-201 form the EngB-type G domain. GTP contacts are provided by residues Gly-35–Ser-42, Gly-62–Leu-66, Asp-80–Gly-83, Thr-147–Asp-150, and Phe-180–Ser-182. Residues Ser-42 and Thr-64 each contribute to the Mg(2+) site.

This sequence belongs to the TRAFAC class TrmE-Era-EngA-EngB-Septin-like GTPase superfamily. EngB GTPase family. Requires Mg(2+) as cofactor.

Functionally, necessary for normal cell division and for the maintenance of normal septation. In Yersinia enterocolitica serotype O:8 / biotype 1B (strain NCTC 13174 / 8081), this protein is Probable GTP-binding protein EngB.